A 116-amino-acid polypeptide reads, in one-letter code: Large ribosomal subunit protein uL23 (116 aa).

Belongs to the universal ribosomal protein uL23 family. As to quaternary structure, part of the 50S ribosomal subunit. Contacts protein L29, and trigger factor when it is bound to the ribosome.

In terms of biological role, one of the early assembly proteins it binds 23S rRNA. One of the proteins that surrounds the polypeptide exit tunnel on the outside of the ribosome. Forms the main docking site for trigger factor binding to the ribosome. The sequence is that of Large ribosomal subunit protein uL23 from Psychrobacter arcticus (strain DSM 17307 / VKM B-2377 / 273-4).